The sequence spans 191 residues: Large ribosomal subunit protein bL9 (191 aa).

Belongs to the bacterial ribosomal protein bL9 family.

Binds to the 23S rRNA. The sequence is that of Large ribosomal subunit protein bL9 from Granulibacter bethesdensis (strain ATCC BAA-1260 / CGDNIH1).